Reading from the N-terminus, the 207-residue chain is Large ribosomal subunit protein uL4 (207 aa).

The tract at residues 45-78 is disordered; that stretch reads RQGTHKTKNRAEVSGGGRKPWRQKGTGRARQGSI.

Belongs to the universal ribosomal protein uL4 family. In terms of assembly, part of the 50S ribosomal subunit.

One of the primary rRNA binding proteins, this protein initially binds near the 5'-end of the 23S rRNA. It is important during the early stages of 50S assembly. It makes multiple contacts with different domains of the 23S rRNA in the assembled 50S subunit and ribosome. Its function is as follows. Forms part of the polypeptide exit tunnel. The protein is Large ribosomal subunit protein uL4 of Geobacillus sp. (strain WCH70).